The following is a 503-amino-acid chain: Cytochrome P450 11B1, mitochondrial (503 aa).

The transit peptide at 1-24 directs the protein to the mitochondrion; that stretch reads MALRAKAEVCMAAPWLSLQRARAL. C450 is a heme binding site.

Belongs to the cytochrome P450 family. The cofactor is heme.

The protein localises to the mitochondrion inner membrane. The catalysed reaction is a steroid + 2 reduced [adrenodoxin] + O2 + 2 H(+) = an 11beta-hydroxysteroid + 2 oxidized [adrenodoxin] + H2O. It catalyses the reaction 11-deoxycortisol + 2 reduced [adrenodoxin] + O2 + 2 H(+) = cortisol + 2 oxidized [adrenodoxin] + H2O. It carries out the reaction 21-hydroxyprogesterone + 2 reduced [adrenodoxin] + O2 + 2 H(+) = corticosterone + 2 oxidized [adrenodoxin] + H2O. The enzyme catalyses 21-hydroxyprogesterone + 2 reduced [adrenodoxin] + O2 + 2 H(+) = 18-hydroxy-11-deoxycorticosterone + 2 oxidized [adrenodoxin] + H2O. The catalysed reaction is 21-hydroxyprogesterone + 2 reduced [adrenodoxin] + O2 + 2 H(+) = 19-hydroxy-11-deoxycorticosterone + 2 oxidized [adrenodoxin] + H2O. It catalyses the reaction cortisol + 2 reduced [adrenodoxin] + O2 + 2 H(+) = 18-hydroxycortisol + 2 oxidized [adrenodoxin] + H2O. It carries out the reaction 11-deoxycortisol + 2 reduced [adrenodoxin] + O2 + 2 H(+) = 18-hydroxy-11-deoxycortisol + 2 oxidized [adrenodoxin] + H2O. It participates in steroid biosynthesis; glucocorticoid biosynthesis. The protein operates within steroid hormone biosynthesis. A cytochrome P450 monooxygenase involved in the biosynthesis of adrenal corticoids. Catalyzes a variety of reactions that are essential for many species, including detoxification, defense, and the formation of endogenous chemicals like steroid hormones. Steroid 11beta, 18- and 19-hydroxylase with preferred regioselectivity at 11beta, then 18, and lastly 19. Catalyzes the hydroxylation of 11-deoxycortisol and 11-deoxycorticosterone (21-hydroxyprogesterone) at 11beta position, yielding cortisol or corticosterone, respectively, but cannot produce aldosterone. Mechanistically, uses molecular oxygen inserting one oxygen atom into a substrate for hydroxylation and reducing the second into a water molecule. Two electrons are provided by NADPH via a two-protein mitochondrial transfer system comprising flavoprotein FDXR (adrenodoxin/ferredoxin reductase) and nonheme iron-sulfur protein FDX1 or FDX2 (adrenodoxin/ferredoxin). Due to its lack of 18-oxidation activity, it is incapable of generating aldosterone. Could also be involved in the androgen metabolic pathway. This is Cytochrome P450 11B1, mitochondrial (CYP11B1) from Papio hamadryas ursinus (Chacma baboon).